Here is an 80-residue protein sequence, read N- to C-terminus: Exodeoxyribonuclease 7 small subunit (80 aa).

This sequence belongs to the XseB family. As to quaternary structure, heterooligomer composed of large and small subunits.

Its subcellular location is the cytoplasm. The catalysed reaction is Exonucleolytic cleavage in either 5'- to 3'- or 3'- to 5'-direction to yield nucleoside 5'-phosphates.. Bidirectionally degrades single-stranded DNA into large acid-insoluble oligonucleotides, which are then degraded further into small acid-soluble oligonucleotides. This Rickettsia akari (strain Hartford) protein is Exodeoxyribonuclease 7 small subunit.